The chain runs to 284 residues: Shikimate dehydrogenase (NADP(+)) (284 aa).

Residues 19–21 (SFS) and Thr-66 each bind shikimate. Catalysis depends on Lys-70, which acts as the Proton acceptor. Position 82 (Asp-82) interacts with NADP(+). Residues Asn-91 and Asp-106 each coordinate shikimate. NADP(+)-binding positions include 130 to 134 (GSGGS) and Ile-226. Tyr-228 contacts shikimate. Position 249 (Gly-249) interacts with NADP(+).

It belongs to the shikimate dehydrogenase family. As to quaternary structure, homodimer.

The enzyme catalyses shikimate + NADP(+) = 3-dehydroshikimate + NADPH + H(+). It functions in the pathway metabolic intermediate biosynthesis; chorismate biosynthesis; chorismate from D-erythrose 4-phosphate and phosphoenolpyruvate: step 4/7. In terms of biological role, involved in the biosynthesis of the chorismate, which leads to the biosynthesis of aromatic amino acids. Catalyzes the reversible NADPH linked reduction of 3-dehydroshikimate (DHSA) to yield shikimate (SA). In Methanococcus vannielii (strain ATCC 35089 / DSM 1224 / JCM 13029 / OCM 148 / SB), this protein is Shikimate dehydrogenase (NADP(+)).